The sequence spans 142 residues: Serine protease inhibitor (142 aa).

Serine 1 bears the N-acetylserine mark.

Its function is as follows. Serine protease inhibitor. Active against beta-trypsin and alpha-chymotrypsin with dissociation constants of 0.35 nM and 40 nM respectively. Inhibits factor XIa, but not other enzymes involved in coagulation and fibrinolysis. Does not inhibit subtilisin, lysyl endopeptidase, arginyl endopeptidase or papain. This chain is Serine protease inhibitor, found in Lentinula edodes (Shiitake mushroom).